The primary structure comprises 238 residues: Endo-chitosanase (238 aa).

The N-terminal stretch at 1 to 17 (MRLSEILTVALVTGATA) is a signal peptide. The N-linked (GlcNAc...) asparagine glycan is linked to N83.

This sequence belongs to the glycosyl hydrolase 75 family.

The protein resides in the secreted. It carries out the reaction Endohydrolysis of beta-(1-&gt;4)-linkages between D-glucosamine residues in a partly acetylated chitosan.. In terms of biological role, chitosanase catalyzing the endo-type cleavage of chitosan, the deacylated form of chitin. Chitosanase may be crucial in the degradation of the deacetylated portion of chitin in the fungal cell wall. Chitoolisaccharides produced by the hydrolysis of partially N-acetylated chitosan are known to have many biological activities, including antibacterial activity, immune-enhancing effects, and elicitor activity. The chitosans with higher degrees of deacetylation were shown to be the better substrates. Chitodimer, chitotrimer, and chitotetramer are the major products but monoacetyl chitodimer, monoacetyl chitotrimer, and monoacetyl chitotetramer are also produced. This chain is Endo-chitosanase (csn), found in Aspergillus fumigatus (Neosartorya fumigata).